We begin with the raw amino-acid sequence, 479 residues long: Isoprimeverose transporter (479 aa).

Helical transmembrane passes span 54–74, 102–122, 131–151, 174–194, 205–225, 253–273, 289–309, 321–341, 348–368, 397–417, and 431–451; these read MFFY…LFLV, PYWL…FTVP, VWAY…NIPI, FMGT…VAYF, WFMV…IVFA, WPWV…QTRS, LASF…ITPW, LMGM…SKAL, VGTI…AVML, FGMG…GYVA, and MNYV…LLFY.

This sequence belongs to the sodium:galactoside symporter (TC 2.A.2) family.

It localises to the cell membrane. In terms of biological role, involved in the metabolism of isoprimeverose. Transports isoprimeverose into the cell. Transport is driven by the proton motive force generated by malolactic fermentation. Cannot transport D-xylose. This is Isoprimeverose transporter from Lactiplantibacillus pentosus (Lactobacillus pentosus).